The primary structure comprises 398 residues: MTNSPRTAAIIVAAGRGLRAGAGGPKQYRSLAGRPVIARAMEPFCTHPGVMAVQPVTNPDDTEMFNAAVAGLNFRPAVGGGATRQASVRAGLEALAELKPDIVLIHDAARCFVTPELISRAITAAGATGAALPVVPVTDTIKQVDSSGAVDATPDRASLRIAQTPQAFRFDVILDAHRRAASGGRDDFTDDAAIAEWAGLTVSTFEGDANNMKMTTPEDFAREESRLMAALGDIRTGTGYDVHAFGEGDHVWLCGLKVPHTRGFLAHSDGDVGLHALVDAILGALADGDIGSHFPPTDPQWKGAASDKFLKYAIDRVTARGGRVANLEVTMICERPKIGPLRDAMRQRIAEITGVPVSRVAVKATTSEKLGFTGREEGIAATASATIRLPWGADGLAG.

The segment at 1–234 (MTNSPRTAAI…SRLMAALGDI (234 aa)) is 2-C-methyl-D-erythritol 4-phosphate cytidylyltransferase. A 2-C-methyl-D-erythritol 2,4-cyclodiphosphate synthase region spans residues 235-398 (RTGTGYDVHA…LPWGADGLAG (164 aa)). The a divalent metal cation site is built by D241 and H243. Residues 241 to 243 (DVH) and 267 to 268 (HS) contribute to the 4-CDP-2-C-methyl-D-erythritol 2-phosphate site. H275 provides a ligand contact to a divalent metal cation. Residues 289 to 291 (DIG), 365 to 368 (TTSE), F372, and R375 each bind 4-CDP-2-C-methyl-D-erythritol 2-phosphate.

The protein in the N-terminal section; belongs to the IspD/TarI cytidylyltransferase family. IspD subfamily. It in the C-terminal section; belongs to the IspF family. Requires a divalent metal cation as cofactor.

The catalysed reaction is 2-C-methyl-D-erythritol 4-phosphate + CTP + H(+) = 4-CDP-2-C-methyl-D-erythritol + diphosphate. It catalyses the reaction 4-CDP-2-C-methyl-D-erythritol 2-phosphate = 2-C-methyl-D-erythritol 2,4-cyclic diphosphate + CMP. The protein operates within isoprenoid biosynthesis; isopentenyl diphosphate biosynthesis via DXP pathway; isopentenyl diphosphate from 1-deoxy-D-xylulose 5-phosphate: step 2/6. It functions in the pathway isoprenoid biosynthesis; isopentenyl diphosphate biosynthesis via DXP pathway; isopentenyl diphosphate from 1-deoxy-D-xylulose 5-phosphate: step 4/6. Functionally, bifunctional enzyme that catalyzes the formation of 4-diphosphocytidyl-2-C-methyl-D-erythritol from CTP and 2-C-methyl-D-erythritol 4-phosphate (MEP) (IspD), and catalyzes the conversion of 4-diphosphocytidyl-2-C-methyl-D-erythritol 2-phosphate (CDP-ME2P) to 2-C-methyl-D-erythritol 2,4-cyclodiphosphate (ME-CPP) with a corresponding release of cytidine 5-monophosphate (CMP) (IspF). The sequence is that of Bifunctional enzyme IspD/IspF from Rhodopseudomonas palustris (strain ATCC BAA-98 / CGA009).